The chain runs to 181 residues: Translationally-controlled tumor protein homolog (181 aa).

Positions 1–181 constitute a TCTP domain; sequence MLIYKDIFTD…VKEAILEEKC (181 aa).

Belongs to the TCTP family.

It is found in the cytoplasm. Functionally, involved in calcium binding and microtubule stabilization. The chain is Translationally-controlled tumor protein homolog (tct-1) from Caenorhabditis briggsae.